Here is a 337-residue protein sequence, read N- to C-terminus: Biotin synthase (337 aa).

Residues alanine 58–alanine 288 enclose the Radical SAM core domain. Cysteine 76, cysteine 80, and cysteine 83 together coordinate [4Fe-4S] cluster. 3 residues coordinate [2Fe-2S] cluster: cysteine 155, cysteine 216, and lysine 286.

Belongs to the radical SAM superfamily. Biotin synthase family. In terms of assembly, homodimer. The cofactor is [4Fe-4S] cluster. [2Fe-2S] cluster is required as a cofactor.

It carries out the reaction (4R,5S)-dethiobiotin + (sulfur carrier)-SH + 2 reduced [2Fe-2S]-[ferredoxin] + 2 S-adenosyl-L-methionine = (sulfur carrier)-H + biotin + 2 5'-deoxyadenosine + 2 L-methionine + 2 oxidized [2Fe-2S]-[ferredoxin]. It participates in cofactor biosynthesis; biotin biosynthesis; biotin from 7,8-diaminononanoate: step 2/2. Its function is as follows. Catalyzes the conversion of dethiobiotin (DTB) to biotin by the insertion of a sulfur atom into dethiobiotin via a radical-based mechanism. This Pelodictyon phaeoclathratiforme (strain DSM 5477 / BU-1) protein is Biotin synthase.